The following is a 665-amino-acid chain: Anaphase-promoting complex subunit 3 (665 aa).

The stretch at 115-148 is one TPR 1 repeat; sequence SCMLDVLGTMYKKAGFLKKATDCFVEAVSINPYN. The DNA-binding element occupies 191–257; it reads VPEPSFLKKS…HQSLKLQSQS (67 aa). TPR repeat units lie at residues 329-362, 363-396, 431-464, 466-498, 499-532, 534-566, 568-600, and 601-634; these read LLKL…QQNT, PFVL…SPSR, PESW…DPTF, YAYT…NVRH, YNAW…NPNN, VLIT…DEKS, LARF…APDE, and ANVH…DGKA.

It belongs to the APC3/CDC27 family. In terms of assembly, the APC/C is composed of at least 13 subunits: apc1, apc2, nuc2, apc4, apc5, cut9, apc8, apc10, apc11, hcn1, apc13, apc14 and apc15. Interacts with apc10 and cut9.

Its subcellular location is the nucleus. In terms of biological role, component of the anaphase-promoting complex/cyclosome (APC/C), a cell cycle-regulated E3 ubiquitin-protein ligase complex that controls progression through mitosis and the G1 phase of the cell cycle. The APC/C is thought to confer substrate specificity and, in the presence of ubiquitin-conjugating E2 enzymes, it catalyzes the formation of protein-ubiquitin conjugates that are subsequently degraded by the 26S proteasome. Interacts with spindle apparatus, chromosomes, or nuclear envelope, and interconnect nuclear and cytoskeletal functions in mitosis, so the elongation of the spindle in anaphase is blocked. In Schizosaccharomyces pombe (strain 972 / ATCC 24843) (Fission yeast), this protein is Anaphase-promoting complex subunit 3 (nuc2).